The sequence spans 506 residues: Transcription factor CP2 (506 aa).

In terms of domain architecture, Grh/CP2 DB spans 61–300; the sequence is ENKILPFQYV…SPGFNSSHNS (240 aa). The tract at residues 133-395 is DNA-binding; sequence EHQQLEGWRW…LFNALKGRIV (263 aa). Disordered regions lie at residues 238-268 and 291-316; these read FKPKGADRKQKTDREKMEKRTPQEKEKYQPS and SPGFNSSHNSFPIGEGNGSPNHQPEP. Basic and acidic residues predominate over residues 241-265; the sequence is KGADRKQKTDREKMEKRTPQEKEKY. Residues 291–300 show a composition bias toward polar residues; the sequence is SPGFNSSHNS.

This sequence belongs to the grh/CP2 family. CP2 subfamily. In terms of assembly, component of the SSP (stage selector protein) complex, which appears to be a heteromer of TFCP2 and 2 copies of NFE4.

It localises to the nucleus. In terms of biological role, may function as a transcription factor. This Xenopus laevis (African clawed frog) protein is Transcription factor CP2 (tfcp2).